Reading from the N-terminus, the 226-residue chain is PKHD-type hydroxylase PP_0862 (226 aa).

The Fe2OG dioxygenase domain occupies 78 to 178 (KVFPPLINCY…RYAAFFWTQS (101 aa)). Histidine 96, aspartate 98, and histidine 159 together coordinate Fe cation. Residue arginine 169 participates in 2-oxoglutarate binding.

Requires Fe(2+) as cofactor. L-ascorbate is required as a cofactor.

The chain is PKHD-type hydroxylase PP_0862 from Pseudomonas putida (strain ATCC 47054 / DSM 6125 / CFBP 8728 / NCIMB 11950 / KT2440).